Consider the following 488-residue polypeptide: Arginine biosynthesis bifunctional protein ArgJ, mitochondrial (488 aa).

Residues T227, K250, T261, E340, N483, and S488 each coordinate substrate. T261 serves as the catalytic Nucleophile.

This sequence belongs to the ArgJ family. As to quaternary structure, heterodimer of an alpha and a beta chain. Post-translationally, the alpha and beta chains are autoproteolytically processed from a single precursor protein within the mitochondrion.

Its subcellular location is the mitochondrion matrix. It carries out the reaction N(2)-acetyl-L-ornithine + L-glutamate = N-acetyl-L-glutamate + L-ornithine. The catalysed reaction is L-glutamate + acetyl-CoA = N-acetyl-L-glutamate + CoA + H(+). It functions in the pathway amino-acid biosynthesis; L-arginine biosynthesis; L-ornithine and N-acetyl-L-glutamate from L-glutamate and N(2)-acetyl-L-ornithine (cyclic): step 1/1. It participates in amino-acid biosynthesis; L-arginine biosynthesis; N(2)-acetyl-L-ornithine from L-glutamate: step 1/4. Functionally, catalyzes two activities which are involved in the cyclic version of arginine biosynthesis: the synthesis of acetylglutamate from glutamate and acetyl-CoA, and of ornithine by transacetylation between acetylornithine and glutamate. The sequence is that of Arginine biosynthesis bifunctional protein ArgJ, mitochondrial from Thalassiosira pseudonana (Marine diatom).